We begin with the raw amino-acid sequence, 331 residues long: GTP 3',8-cyclase (331 aa).

Positions Ser9–Pro233 constitute a Radical SAM core domain. GTP is bound at residue Arg18. [4Fe-4S] cluster is bound by residues Cys25 and Cys29. An S-adenosyl-L-methionine-binding site is contributed by Tyr31. Position 32 (Cys32) interacts with [4Fe-4S] cluster. Arg67 provides a ligand contact to GTP. Gly71 contacts S-adenosyl-L-methionine. Thr98 is a GTP binding site. Ser122 lines the S-adenosyl-L-methionine pocket. Lys159 provides a ligand contact to GTP. Met193 contributes to the S-adenosyl-L-methionine binding site. The [4Fe-4S] cluster site is built by Cys257 and Cys260. Residue Arg262–Arg264 coordinates GTP. Cys274 serves as a coordination point for [4Fe-4S] cluster.

It belongs to the radical SAM superfamily. MoaA family. As to quaternary structure, monomer and homodimer. Requires [4Fe-4S] cluster as cofactor.

It catalyses the reaction GTP + AH2 + S-adenosyl-L-methionine = (8S)-3',8-cyclo-7,8-dihydroguanosine 5'-triphosphate + 5'-deoxyadenosine + L-methionine + A + H(+). The protein operates within cofactor biosynthesis; molybdopterin biosynthesis. Catalyzes the cyclization of GTP to (8S)-3',8-cyclo-7,8-dihydroguanosine 5'-triphosphate. In Saccharophagus degradans (strain 2-40 / ATCC 43961 / DSM 17024), this protein is GTP 3',8-cyclase.